A 657-amino-acid chain; its full sequence is Endoplasmic reticulum chaperone BiP homolog (657 aa).

Positions 1-17 (MKVFSLILIAFVANAYC) are cleaved as a signal peptide. ATP contacts are provided by residues 38–41 (GTTY), Lys-99, 229–231 (GGT), 295–302 (EKAKRALS), and 366–369 (GSTR). Positions 128 to 282 (KPNVEVKVGS…KKKSGKDLRK (155 aa)) are nucleotide-binding (NBD). A substrate-binding (SBD) region spans residues 402-502 (VQAGVIGGVE…PRGVPQIEVT (101 aa)). Residues 607 to 657 (LGSNQDASTEENKEQKKELESVVQPIVSKLYSAGGQGEQASEEPSEDHDEL) are disordered. Residues 616–626 (EENKEQKKELE) are compositionally biased toward basic and acidic residues. Acidic residues predominate over residues 646 to 657 (ASEEPSEDHDEL). Positions 654 to 657 (HDEL) match the Prevents secretion from ER motif.

Belongs to the heat shock protein 70 family.

It localises to the endoplasmic reticulum lumen. The catalysed reaction is ATP + H2O = ADP + phosphate + H(+). The chaperone activity is regulated by ATP-induced allosteric coupling of the nucleotide-binding (NBD) and substrate-binding (SBD) domains. In the ADP-bound and nucleotide-free (apo) states, the two domains have little interaction. In contrast, in the ATP-bound state the two domains are tightly coupled, which results in drastically accelerated kinetics in both binding and release of polypeptide substrates. J domain-containing co-chaperones stimulate the ATPase activity and are required for efficient substrate recognition. Its function is as follows. Endoplasmic reticulum chaperone that plays a key role in protein folding and quality control in the endoplasmic reticulum lumen. Required for ER dynamics during the first embryonic cell divisions. Specifically, controls ER transition into sheet-like structures at the onset of mitosis, possibly by regulating homotypic membrane fusion. This chain is Endoplasmic reticulum chaperone BiP homolog (hsp-4), found in Caenorhabditis elegans.